A 133-amino-acid polypeptide reads, in one-letter code: Small ribosomal subunit protein uS8 (133 aa).

It belongs to the universal ribosomal protein uS8 family. In terms of assembly, part of the 30S ribosomal subunit. Contacts proteins S5 and S12.

Its function is as follows. One of the primary rRNA binding proteins, it binds directly to 16S rRNA central domain where it helps coordinate assembly of the platform of the 30S subunit. The sequence is that of Small ribosomal subunit protein uS8 from Chlamydia pneumoniae (Chlamydophila pneumoniae).